Reading from the N-terminus, the 192-residue chain is Transmembrane protein 276 (192 aa).

An N-terminal signal peptide occupies residues 1 to 32 (MVSKPRNEWSTALSHLVLAGVSLHAAVSSVQS). Helical transmembrane passes span 35–55 (GAAA…APEL), 63–83 (AGAW…FHWV), 92–112 (LLLG…PEGC), and 114–134 (VAGQ…AVFT).

The protein resides in the membrane. The chain is Transmembrane protein 276 from Rattus norvegicus (Rat).